Reading from the N-terminus, the 140-residue chain is Putative esterase MT1895 (140 aa).

This sequence belongs to the thioesterase PaaI family.

In Mycobacterium tuberculosis (strain CDC 1551 / Oshkosh), this protein is Putative esterase MT1895.